The primary structure comprises 321 residues: Transaldolase (321 aa).

Catalysis depends on K132, which acts as the Schiff-base intermediate with substrate.

It belongs to the transaldolase family. Type 1 subfamily. As to quaternary structure, homodimer.

The protein resides in the cytoplasm. The enzyme catalyses D-sedoheptulose 7-phosphate + D-glyceraldehyde 3-phosphate = D-erythrose 4-phosphate + beta-D-fructose 6-phosphate. Its pathway is carbohydrate degradation; pentose phosphate pathway; D-glyceraldehyde 3-phosphate and beta-D-fructose 6-phosphate from D-ribose 5-phosphate and D-xylulose 5-phosphate (non-oxidative stage): step 2/3. Transaldolase is important for the balance of metabolites in the pentose-phosphate pathway. This is Transaldolase from Marinobacter nauticus (strain ATCC 700491 / DSM 11845 / VT8) (Marinobacter aquaeolei).